The primary structure comprises 66 residues: Protein I177L (66 aa).

N-linked (GlcNAc...) asparagine; by host glycosylation occurs at Asn-11.

This sequence belongs to the asfivirus I177L family.

The protein localises to the virion. The sequence is that of Protein I177L from African swine fever virus (strain Badajoz 1971 Vero-adapted) (Ba71V).